A 72-amino-acid chain; its full sequence is Translation initiation factor IF-1 2 (72 aa).

The region spanning 1–72 (MAKEDVIEMQ…TKGRIVFRTK (72 aa)) is the S1-like domain.

The protein belongs to the IF-1 family. As to quaternary structure, component of the 30S ribosomal translation pre-initiation complex which assembles on the 30S ribosome in the order IF-2 and IF-3, IF-1 and N-formylmethionyl-tRNA(fMet); mRNA recruitment can occur at any time during PIC assembly.

The protein localises to the cytoplasm. Functionally, one of the essential components for the initiation of protein synthesis. Stabilizes the binding of IF-2 and IF-3 on the 30S subunit to which N-formylmethionyl-tRNA(fMet) subsequently binds. Helps modulate mRNA selection, yielding the 30S pre-initiation complex (PIC). Upon addition of the 50S ribosomal subunit IF-1, IF-2 and IF-3 are released leaving the mature 70S translation initiation complex. The chain is Translation initiation factor IF-1 2 from Azoarcus sp. (strain BH72).